Here is a 1252-residue protein sequence, read N- to C-terminus: MLKCPERVSVKKKEDIPDLPNLIEIQIKSYKQFLQIGKLAEERENIGLEEVFREIFPIKSYNEATVLEYLSYNLGVPKYSPEECIRRGITYSVTLKVRFRLTDETGIKEEEVYMGTIPLMTDKGTFIINGAERVVVSQVHRSPGINFEQEKHSKGNILFSFRIIPYRGSWLEAIFDINDLIYIHIDRKKRRRKILAITFIRALGYSSDADIIEEFFTIGESSLRSEKDFALLVGRILADNIIDEASSLVYGKAGEKLSTAMLKRMLDAGIASVKIAVDADENHPIIKMLAKDPTDSYEAALKDFYRRLRPGEPATLANARSTIMRLFFDPKRYNLGRVGRYKLNRKLGFSIDDEALSQVTLRKEDVIGALKYLIRLKMGDEKACVDDIDHLANRRVRSVGELIQNQCRSGLARMEKIVRERMNLFDFSSDTLTPGKVVSAKGLASVLKDFFGRSQLSQFMDQTNPVAELTHKRRLSALGPGGLNRERAGFEVRDVHASHYGRICPIETPEGPNIGLITSLSSFAKINEFGFIETPYRIVRDGIVTDEIEYMTADVEEECVIAQASASLDEYNMFTEPVCWVRYAGEAFEADTSTVTHMDVSPKQLVSIVTGLIPFLEHDDANRALMGSNMQRQAVPLLKTEAPVVGTGLECRAAKDSGAIVVAEEDGVVDFVDGYKVVVAAKHNPTIKRTYHLKKFLRSNSGTCINQQPLCAVGDVITKGDVIADGPATDRGELALGKNVLVAFMPWYGYNFEDAIIISEKLIREDAYTSIYIEEFELTARDTKLGKEEITRDIPNVSDEVLANLGEDGIIRIGAEVKPGDILVGKITPKSETELAPEERLLRAIFGEKAADVKDASLTVPPGTEGVVMDVKVFSRKDRLSKSDDELVEEAVHLKDLQKGYKNQVATLKTEYREKLGALLLNEKAPAAIIHRRTAEIVVHEGLLFDQETIERIEQEDLVDLLMPNCEMYEVLKGLLSDYETALQRLEINYKTEVEHIREGDADLDHGVIRQVKVYVASKRKLQVGDKMAGRHGNKGVVSKIVPEADMPYLSNGETVQMILNPLGVPSRMNLGQVLETHLGYAAKTAGIYVKTPVFEGFPEQRIWDMMIEQGLPEDGKSFLYDGKTGERFDNKVVIGYIYMLKLSHLIADKIHARSIGPYSLVTQQPLGGKAQMGGQRFGEMEVWALEAYGVAHMLQEILTVKSDDVSGRTRIYESIVKGENLLRSGTPESFNVLIKEMQGLGLDVRPMVVDA.

This sequence belongs to the RNA polymerase beta chain family. The RNAP catalytic core consists of 2 alpha, 1 beta, 1 beta' and 1 omega subunit. When a sigma factor is associated with the core the holoenzyme is formed, which can initiate transcription.

It catalyses the reaction RNA(n) + a ribonucleoside 5'-triphosphate = RNA(n+1) + diphosphate. In terms of biological role, DNA-dependent RNA polymerase catalyzes the transcription of DNA into RNA using the four ribonucleoside triphosphates as substrates. The polypeptide is DNA-directed RNA polymerase subunit beta (Chlamydia pneumoniae (Chlamydophila pneumoniae)).